The chain runs to 216 residues: Pyrophosphatase PpaX (216 aa).

The active-site Nucleophile is Asp-9.

Belongs to the HAD-like hydrolase superfamily. PpaX family. The cofactor is Mg(2+).

The enzyme catalyses diphosphate + H2O = 2 phosphate + H(+). Its function is as follows. Hydrolyzes pyrophosphate formed during P-Ser-HPr dephosphorylation by HPrK/P. Might play a role in controlling the intracellular pyrophosphate pool. The protein is Pyrophosphatase PpaX of Bacillus anthracis (strain CDC 684 / NRRL 3495).